We begin with the raw amino-acid sequence, 328 residues long: Flap endonuclease 1 (328 aa).

The tract at residues 1 to 98 (MGVKLRDVVS…ETVSRRADIR (98 aa)) is N-domain. Positions 27, 80, 152, 154, 173, 175, and 226 each coordinate Mg(2+). Positions 116 to 247 (RAKKYAVRSS…RGLKLIREKG (132 aa)) are I-domain. The segment at 320-328 (TQKSLEDWF) is interaction with PCNA.

It belongs to the XPG/RAD2 endonuclease family. FEN1 subfamily. Interacts with PCNA. PCNA stimulates the nuclease activity without altering cleavage specificity. Mg(2+) is required as a cofactor.

Structure-specific nuclease with 5'-flap endonuclease and 5'-3' exonuclease activities involved in DNA replication and repair. During DNA replication, cleaves the 5'-overhanging flap structure that is generated by displacement synthesis when DNA polymerase encounters the 5'-end of a downstream Okazaki fragment. Binds the unpaired 3'-DNA end and kinks the DNA to facilitate 5' cleavage specificity. Cleaves one nucleotide into the double-stranded DNA from the junction in flap DNA, leaving a nick for ligation. Also involved in the base excision repair (BER) pathway. Acts as a genome stabilization factor that prevents flaps from equilibrating into structures that lead to duplications and deletions. Also possesses 5'-3' exonuclease activity on nicked or gapped double-stranded DNA. The sequence is that of Flap endonuclease 1 from Methanothermobacter thermautotrophicus (strain ATCC 29096 / DSM 1053 / JCM 10044 / NBRC 100330 / Delta H) (Methanobacterium thermoautotrophicum).